The following is a 695-amino-acid chain: Segment polarity protein dishevelled homolog DVL-1 (695 aa).

One can recognise a DIX domain in the interval 1 to 85 (MAETKIIYHM…RVVSWLVLAE (85 aa)). Residues 89-237 (SDAGSQGTDS…LRQADRASSF (149 aa)) form a disordered region. The span at 142–151 (SHRRERARRR) shows a compositional bias: basic residues. Basic and acidic residues predominate over residues 152 to 171 (NREEAARTNGHPRGDRRRDV). Positions 176 to 192 (DSASTALSSELESSSFV) are enriched in low complexity. A Phosphoserine modification is found at Ser-194. A compositionally biased stretch (low complexity) spans 200-214 (TSRLSSSTEQSTSSR). Residues 215–228 (LIRKHKRRRRKQRL) are compositionally biased toward basic residues. Residues 251–323 (TVTLNMERHH…NDDAVRVLRE (73 aa)) form the PDZ domain. In terms of domain architecture, DEP spans 425 to 499 (PDSGLEIRDR…SEQCYYVFGD (75 aa)). The tract at residues 543–667 (PGPPPCFPPA…PGGPPVRELA (125 aa)) is disordered. Low complexity predominate over residues 551-580 (PAYQDPGFSYGSGSTGSQQSEGSKSSGSTR). Residues 625–636 (SRGSSPRSQASA) are compositionally biased toward polar residues.

This sequence belongs to the DSH family. As to quaternary structure, interacts with CXXC4. Interacts (via PDZ domain) with NXN. Interacts with BRD7 and INVS. Interacts (via PDZ domain) with VANGL1 and VANGL2 (via C-terminus). Interacts with ARRB1; the interaction is enhanced by phosphorylation of DVL1. Interacts with CYLD. Interacts (via PDZ domain) with RYK. Self-associates (via DIX domain) and forms higher homooligomers. Interacts (via PDZ domain) with DACT1 and FZD7, where DACT1 and FZD7 compete for the same binding site. Interacts (via DEP domain) with MUSK; the interaction is direct and mediates the formation a DVL1, MUSK and PAK1 ternary complex involved in AChR clustering. Interacts (via PDZ domain) with TMEM88. Interacts with DCDC2. Interacts with FOXK2. Interacts with PKD1 (via extracellular domain). Interacts (via PDZ domain) with CCDC88C/DAPLE; competes with CCDC88C for binding to frizzled receptor FZD7 and dissociates from CCDC88C following initiation of non-canonical Wnt signaling when CCDC88C displaces DVL1 from ligand-activated FZD7. Ubiquitinated; undergoes both 'Lys-48'-linked ubiquitination, leading to its subsequent degradation by the ubiquitin-proteasome pathway, and 'Lys-63'-linked ubiquitination. The interaction with INVS is required for ubiquitination. Deubiquitinated by CYLD, which acts on 'Lys-63'-linked ubiquitin chains.

Its subcellular location is the cell membrane. The protein resides in the cytoplasm. The protein localises to the cytosol. It is found in the cytoplasmic vesicle. Participates in Wnt signaling by binding to the cytoplasmic C-terminus of frizzled family members and transducing the Wnt signal to down-stream effectors. Plays a role both in canonical and non-canonical Wnt signaling. Plays a role in the signal transduction pathways mediated by multiple Wnt genes. Required for LEF1 activation upon WNT1 and WNT3A signaling. DVL1 and PAK1 form a ternary complex with MUSK which is important for MUSK-dependent regulation of AChR clustering during the formation of the neuromuscular junction (NMJ). The chain is Segment polarity protein dishevelled homolog DVL-1 (DVL1) from Homo sapiens (Human).